Consider the following 193-residue polypeptide: Ion-translocating oxidoreductase complex subunit A (193 aa).

A run of 6 helical transmembrane segments spans residues 4 to 24 (FLLLLIGTVLVNNFVLVQFLG), 39 to 59 (IGMSMATTFVLTLASLSSYLV), 63 to 83 (ILLPLGIEYLRTLSFILVIAV), 102 to 122 (LLGIFLPLITTNCAVLGVALL), 134 to 154 (VIYGFGAAVGFSLVLILFAAM), and 171 to 191 (SISMITAGLMSLAFLGFTGLV).

It belongs to the NqrDE/RnfAE family. The complex is composed of six subunits: RnfA, RnfB, RnfC, RnfD, RnfE and RnfG.

It localises to the cell inner membrane. Part of a membrane-bound complex that couples electron transfer with translocation of ions across the membrane. The protein is Ion-translocating oxidoreductase complex subunit A of Pseudoalteromonas atlantica (strain T6c / ATCC BAA-1087).